Here is a 69-residue protein sequence, read N- to C-terminus: Large ribosomal subunit protein uL29 (69 aa).

This sequence belongs to the universal ribosomal protein uL29 family.

The polypeptide is Large ribosomal subunit protein uL29 (Granulibacter bethesdensis (strain ATCC BAA-1260 / CGDNIH1)).